Reading from the N-terminus, the 245-residue chain is 14-3-3 protein theta (245 aa).

Met1 bears the N-acetylmethionine mark. At Lys3 the chain carries N6-acetyllysine. The residue at position 49 (Lys49) is an N6-acetyllysine; alternate. Lys49 participates in a covalent cross-link: Glycyl lysine isopeptide (Lys-Gly) (interchain with G-Cter in SUMO2); alternate. At Lys68 the chain carries N6-acetyllysine. Tyr82 bears the 3'-nitrotyrosine mark. Ser92 carries the phosphoserine modification. 3'-nitrotyrosine is present on Tyr104. Lys115 is subject to N6-acetyllysine. A Phosphoserine; by CK1 modification is found at Ser232.

It belongs to the 14-3-3 family. Homodimer. Interacts with CDK16. Interacts with RGS7 (phosphorylated form). Interacts with SSH1. Interacts with CDKN1B ('Thr-198' phosphorylated form); the interaction translocates CDKN1B to the cytoplasm. Interacts with GAB2. Interacts with the 'Ser-241' phosphorylated form of PDPK1. Interacts with the 'Thr-369' phosphorylated form of DAPK2. Interacts with PI4KB, TBC1D22A and TBC1D22B. Interacts with SLITRK1. Interacts with RIPOR2. Interacts with INAVA; the interaction increases upon PRR (pattern recognition receptor) stimulation and is required for cellular signaling pathway activation and cytokine secretion. Interacts with MARK2, MARK3 and MARK4. Interacts with MEFV.

Its subcellular location is the cytoplasm. Functionally, adapter protein implicated in the regulation of a large spectrum of both general and specialized signaling pathways. Binds to a large number of partners, usually by recognition of a phosphoserine or phosphothreonine motif. Binding generally results in the modulation of the activity of the binding partner. Negatively regulates the kinase activity of PDPK1. The sequence is that of 14-3-3 protein theta (YWHAQ) from Bos taurus (Bovine).